The primary structure comprises 62 residues: DNA-binding protein 7 (62 aa).

This sequence belongs to the 7 kDa DNA-binding/endoribonuclease P2 family. Monomer.

It localises to the cytoplasm. Can constrain negative DNA supercoils. May be involved in maintaining the integrity of the genome at high temperature. This Metallosphaera cuprina (strain Ar-4) protein is DNA-binding protein 7.